The sequence spans 496 residues: Cytochrome P450 71A15 (496 aa).

Residues 3–23 (IIIISLCLATILAFLLLKPLL) form a helical membrane-spanning segment. Heme is bound at residue C439.

Belongs to the cytochrome P450 family. It depends on heme as a cofactor.

Its subcellular location is the membrane. The protein is Cytochrome P450 71A15 (CYP71A15) of Arabidopsis thaliana (Mouse-ear cress).